The following is a 339-amino-acid chain: Anthranilate phosphoribosyltransferase (339 aa).

Residues Gly80, 83-84 (GD), 90-93 (NVST), 108-116 (KHGNRSVTS), and Ser120 contribute to the 5-phospho-alpha-D-ribose 1-diphosphate site. Gly80 is a binding site for anthranilate. Ser92 is a Mg(2+) binding site. Asn111 contacts anthranilate. Arg166 is an anthranilate binding site. Residues Asp225 and Glu226 each contribute to the Mg(2+) site.

The protein belongs to the anthranilate phosphoribosyltransferase family. In terms of assembly, homodimer. Requires Mg(2+) as cofactor.

The catalysed reaction is N-(5-phospho-beta-D-ribosyl)anthranilate + diphosphate = 5-phospho-alpha-D-ribose 1-diphosphate + anthranilate. It participates in amino-acid biosynthesis; L-tryptophan biosynthesis; L-tryptophan from chorismate: step 2/5. Catalyzes the transfer of the phosphoribosyl group of 5-phosphorylribose-1-pyrophosphate (PRPP) to anthranilate to yield N-(5'-phosphoribosyl)-anthranilate (PRA). This chain is Anthranilate phosphoribosyltransferase, found in Ignicoccus hospitalis (strain KIN4/I / DSM 18386 / JCM 14125).